The following is a 332-amino-acid chain: ADP-L-glycero-D-manno-heptose-6-epimerase (332 aa).

Residues 13-14 (FI), 34-35 (DN), Lys41, Lys56, 78-82 (EGACS), and Asn95 each bind NADP(+). Residue Tyr142 is the Proton acceptor of the active site. NADP(+) is bound at residue Lys146. Asn171 is a binding site for substrate. Positions 172 and 180 each coordinate NADP(+). Lys180 (proton acceptor) is an active-site residue. Residues Arg182, His189, 203–206 (FEGC), Arg216, and Tyr295 contribute to the substrate site.

Belongs to the NAD(P)-dependent epimerase/dehydratase family. HldD subfamily. As to quaternary structure, homopentamer. NADP(+) serves as cofactor.

The enzyme catalyses ADP-D-glycero-beta-D-manno-heptose = ADP-L-glycero-beta-D-manno-heptose. Its pathway is nucleotide-sugar biosynthesis; ADP-L-glycero-beta-D-manno-heptose biosynthesis; ADP-L-glycero-beta-D-manno-heptose from D-glycero-beta-D-manno-heptose 7-phosphate: step 4/4. Its function is as follows. Catalyzes the interconversion between ADP-D-glycero-beta-D-manno-heptose and ADP-L-glycero-beta-D-manno-heptose via an epimerization at carbon 6 of the heptose. The chain is ADP-L-glycero-D-manno-heptose-6-epimerase from Thiobacillus denitrificans (strain ATCC 25259 / T1).